The following is a 1064-amino-acid chain: Serine protease inhibitor Kazal-type 5 (1064 aa).

The first 22 residues, 1–22 (MKIATVSVLLPLALCLIQDAAS), serve as a signal peptide directing secretion. Positions 28-66 (EMCHEFQAFMKNGKLFCPQDKKFFQSLDGIMFINKCATC) constitute a Kazal-like 1; atypical domain. 21 disulfides stabilise this stretch: Cys30-Cys66, Cys44-Cys63, Cys97-Cys133, Cys111-Cys130, Cys119-Cys151, Cys161-Cys197, Cys175-Cys194, Cys225-Cys261, Cys239-Cys258, Cys297-Cys333, Cys311-Cys330, Cys367-Cys403, Cys381-Cys400, Cys437-Cys473, Cys451-Cys470, Cys496-Cys532, Cys510-Cys529, Cys567-Cys603, Cys581-Cys600, Cys632-Cys668, and Cys646-Cys665. 14 consecutive Kazal-like domains span residues 91–153 (APTE…ECKS), 155–216 (NPEQ…ETRI), 219–285 (NAEK…KAEE), 291–352 (REIV…ARAR), 361–423 (TSYA…KSRN), 431–489 (ASFE…KAKR), 490–551 (EAAK…EEKG), 561–622 (EAVQ…PRAK), 626–688 (EAEK…EDQR), 701–757 (GNTQ…KNEY), 768–830 (ESGK…EDRS), 843–905 (NDKE…EKSS), 910–971 (NNAK…EKPS), and 987–1048 (SLDS…KCEE). The span at 676–688 (NEERKRKEEEDQR) shows a compositional bias: basic and acidic residues. The tract at residues 676-705 (NEERKRKEEEDQRNAAGHGSSGGGGGNTQD) is disordered. Disulfide bonds link Cys707–Cys743, Cys721–Cys740, Cys774–Cys810, Cys788–Cys807, Cys849–Cys885, and Cys863–Cys882. The tract at residues 751–775 (AERKNEYSRSRSNGTGSESGKDTCD) is disordered. Residues 818 to 849 (AAEKKKKEDEDRSNTGERSNTGERSNDKEDLC) form a disordered region. The span at 895–905 (ERKKKDEEKSS) shows a compositional bias: basic and acidic residues. A disordered region spans residues 895 to 915 (ERKKKDEEKSSSKPSNNAKDE). Intrachain disulfides connect Cys916–Cys952 and Cys930–Cys949. Basic and acidic residues predominate over residues 967–977 (QEKPSHVRASQ). Residues 967–987 (QEKPSHVRASQEEDSPDSFSS) form a disordered region. 3 cysteine pairs are disulfide-bonded: Cys993–Cys1028, Cys1006–Cys1025, and Cys1014–Cys1046. The tract at residues 1041-1064 (RSTGKCEESSTPGTTAASMPPSDE) is disordered.

Proteolytically processed by furin in individual domains (D1, D5, D6, D8 through D11, and D9 through D15) exhibiting various inhibitory potentials for multiple proteases. As to expression, highly expressed in the thymus and stratum corneum. Also found in the oral mucosa, parathyroid gland, Bartholin's glands, tonsils, and vaginal epithelium. Very low levels are detected in lung, kidney, and prostate.

The protein resides in the secreted. Functionally, serine protease inhibitor, probably important for the anti-inflammatory and/or antimicrobial protection of mucous epithelia. Contribute to the integrity and protective barrier function of the skin by regulating the activity of defense-activating and desquamation-involved proteases. Inhibits KLK5, it's major target, in a pH-dependent manner. Inhibits KLK7, KLK14 CASP14, and trypsin. The protein is Serine protease inhibitor Kazal-type 5 (SPINK5) of Homo sapiens (Human).